The following is a 249-amino-acid chain: Coproheme decarboxylase (249 aa).

Fe-coproporphyrin III is bound by residues Arg131, 145 to 149 (YPMDK), His172, and Gln185. Tyr145 is an active-site residue.

It belongs to the ChdC family. Type 1 subfamily. Fe-coproporphyrin III serves as cofactor.

The enzyme catalyses Fe-coproporphyrin III + 2 H2O2 + 2 H(+) = heme b + 2 CO2 + 4 H2O. It carries out the reaction Fe-coproporphyrin III + H2O2 + H(+) = harderoheme III + CO2 + 2 H2O. The catalysed reaction is harderoheme III + H2O2 + H(+) = heme b + CO2 + 2 H2O. The protein operates within porphyrin-containing compound metabolism; protoheme biosynthesis. Involved in coproporphyrin-dependent heme b biosynthesis. Catalyzes the decarboxylation of Fe-coproporphyrin III (coproheme) to heme b (protoheme IX), the last step of the pathway. The reaction occurs in a stepwise manner with a three-propionate intermediate. In Staphylococcus epidermidis (strain ATCC 35984 / DSM 28319 / BCRC 17069 / CCUG 31568 / BM 3577 / RP62A), this protein is Coproheme decarboxylase.